The sequence spans 152 residues: Large ribosomal subunit protein bL9 (152 aa).

It belongs to the bacterial ribosomal protein bL9 family.

Functionally, binds to the 23S rRNA. This chain is Large ribosomal subunit protein bL9, found in Mycobacterium bovis (strain ATCC BAA-935 / AF2122/97).